Reading from the N-terminus, the 250-residue chain is Hydroxyacylglutathione hydrolase (250 aa).

Zn(2+) contacts are provided by His-52, His-54, Asp-56, His-57, His-107, Asp-128, and His-166.

The protein belongs to the metallo-beta-lactamase superfamily. Glyoxalase II family. In terms of assembly, monomer. Zn(2+) is required as a cofactor.

The enzyme catalyses an S-(2-hydroxyacyl)glutathione + H2O = a 2-hydroxy carboxylate + glutathione + H(+). It functions in the pathway secondary metabolite metabolism; methylglyoxal degradation; (R)-lactate from methylglyoxal: step 2/2. Functionally, thiolesterase that catalyzes the hydrolysis of S-D-lactoyl-glutathione to form glutathione and D-lactic acid. The polypeptide is Hydroxyacylglutathione hydrolase (Neisseria meningitidis serogroup A / serotype 4A (strain DSM 15465 / Z2491)).